Reading from the N-terminus, the 134-residue chain is Small ribosomal subunit protein uS8c (134 aa).

The protein belongs to the universal ribosomal protein uS8 family. As to quaternary structure, part of the 30S ribosomal subunit.

Its subcellular location is the plastid. The protein localises to the chloroplast. Its function is as follows. One of the primary rRNA binding proteins, it binds directly to 16S rRNA central domain where it helps coordinate assembly of the platform of the 30S subunit. The polypeptide is Small ribosomal subunit protein uS8c (rps8) (Phaseolus angularis (Azuki bean)).